The sequence spans 381 residues: Pre-mRNA-splicing factor cwf28 (381 aa).

Residues 1-21 (MKRKAVLEAFSDSEDEDEKKL) form a disordered region. Phosphoserine is present on residues Ser11 and Ser13. Positions 104 to 157 (AADNEIVDWKANNSNEKAQNKIATNKESTDILPEEVQLVLNDLNDDVKSANSAN) form a coiled coil. The disordered stretch occupies residues 262–381 (LNSQNEHTEV…DRSYRSTRTL (120 aa)). A compositionally biased stretch (polar residues) spans 274–285 (KSNSIDNLTPSS). A phosphoserine mark is found at Ser275 and Ser277. 3 stretches are compositionally biased toward basic and acidic residues: residues 287-297 (LFRKRSRDNNL), 306-332 (KHLD…EYHS), and 362-375 (SDRY…DRSY).

Belongs to the SPP2 family. Belongs to the 40S cdc5-associated complex (or cwf complex), a spliceosome sub-complex reminiscent of a late-stage spliceosome composed of the U2, U5 and U6 snRNAs and at least brr2, cdc5, cwf2/prp3, cwf3/syf1, cwf4/syf3, cwf5/ecm2, spp42/cwf6, cwf7/spf27, cwf8, cwf9, cwf10, cwf11, cwf12, prp45/cwf13, cwf14, cwf15, cwf16, cwf17, cwf18, cwf19, cwf20, cwf21, cwf22, cwf23, cwf24, cwf25, cwf26, cyp7/cwf27, cwf28, cwf29/ist3, lea1, msl1, prp5/cwf1, prp10, prp12/sap130, prp17, prp22, sap61, sap62, sap114, sap145, slu7, smb1, smd1, smd3, smf1, smg1 and syf2.

It is found in the nucleus. In terms of biological role, involved in spliceosome maturation and the first step of pre-mRNA splicing. The polypeptide is Pre-mRNA-splicing factor cwf28 (cwf28) (Schizosaccharomyces pombe (strain 972 / ATCC 24843) (Fission yeast)).